Here is a 302-residue protein sequence, read N- to C-terminus: 33 kDa chaperonin (302 aa).

Intrachain disulfides connect cysteine 234–cysteine 236 and cysteine 267–cysteine 270.

It belongs to the HSP33 family. Under oxidizing conditions two disulfide bonds are formed involving the reactive cysteines. Under reducing conditions zinc is bound to the reactive cysteines and the protein is inactive.

It localises to the cytoplasm. In terms of biological role, redox regulated molecular chaperone. Protects both thermally unfolding and oxidatively damaged proteins from irreversible aggregation. Plays an important role in the bacterial defense system toward oxidative stress. This is 33 kDa chaperonin from Neisseria meningitidis serogroup A / serotype 4A (strain DSM 15465 / Z2491).